The primary structure comprises 319 residues: Extracellular phospholipase A1 (319 aa).

The signal sequence occupies residues 1 to 24 (MSMPLSFTSAVSPVAAIPTPRAAA).

The enzyme catalyses a 1,2-diacyl-sn-glycero-3-phosphocholine + H2O = a 2-acyl-sn-glycero-3-phosphocholine + a fatty acid + H(+). This Serratia liquefaciens protein is Extracellular phospholipase A1 (phlA).